The chain runs to 625 residues: MGLVNGRASLTFLLAALTIIAMVVEARFVVEKESISVLNPEEMRSKHDGSIANFGLPDYGGFLIGSVVYPDSKTDGCSAFGKTFKPKFPRPTILLLDRGGCYFALKAWHAQQAGAAAVLVADNVDEPLLTMDSPEESKDADGFIEKLTIPSVLIDKSFGDDLRQGFQKGKNIVIKLDWRESVPHPDKRVEYELWTNSNDECGARCDEQMDFVKNFKGHAQILEKGGYTAFTPHYITWFCPFQFINSPHCKSQCINHGRYCAPDPEDNFREGYEGKDVVLENLRQLCVHRVANESSRPWVWWDYVTDFHSRCSMKEKKYSIDCAESVIKSLNLPIEKIKKCIGDPEADTENQVLRTEQVSQIGRGNRGDVTILPTLVINNAQYRGRLERTAVLKAICAGFNETSEPAICLNTGLETNECLENNGGCWQDTKANITACQDTFRGRLCECPVVKGVQYKGDGYTSCTPYGPARCTMNNGGCWSDTRNGLTFSACSDSVSTGCKCPEGFQGDGLTCEDINECKERSVCQCSGCRCKNSWGGYKCSCSGDRLYINDQDTCIERYGSKTAWWLTFLILAIVAVAGLAGYIFYKYRFRSYMDSEIMTIMSQYMPLESQRAREVPSEAEPFTL.

The N-terminal stretch at 1–26 (MGLVNGRASLTFLLAALTIIAMVVEA) is a signal peptide. At 27-564 (RFVVEKESIS…CIERYGSKTA (538 aa)) the chain is on the lumenal side. Residues 58-166 (DYGGFLIGSV…SFGDDLRQGF (109 aa)) form the PA domain. Residues Asn-292, Asn-400, and Asn-432 are each glycosylated (N-linked (GlcNAc...) asparagine). EGF-like domains lie at 414 to 464 (ETNE…TSCT) and 467 to 513 (GPAR…LTCE). 7 disulfide bridges follow: Cys-418–Cys-436, Cys-425–Cys-445, Cys-447–Cys-463, Cys-471–Cys-491, Cys-478–Cys-499, Cys-501–Cys-512, and Cys-542–Cys-555. The region spanning 514 to 556 (DINECKERSVCQCSGCRCKNSWGGYKCSCSGDRLYINDQDTCI) is the EGF-like 3; calcium-binding domain. Residues 565–585 (WWLTFLILAIVAVAGLAGYIF) traverse the membrane as a helical segment. Topologically, residues 586 to 625 (YKYRFRSYMDSEIMTIMSQYMPLESQRAREVPSEAEPFTL) are cytoplasmic. Positions 605 to 608 (YMPL) match the Tyrosine-based internalization motif motif.

The protein belongs to the VSR (BP-80) family. As to expression, expressed at low levels in seedlings, roots, young leaves, flowers and siliques.

Its subcellular location is the golgi apparatus membrane. Functionally, vacuolar-sorting receptor (VSR) involved in clathrin-coated vesicles sorting from Golgi apparatus to vacuoles. The sequence is that of Vacuolar-sorting receptor 7 (VSR7) from Arabidopsis thaliana (Mouse-ear cress).